The following is a 99-amino-acid chain: Large ribosomal subunit protein eL30 (99 aa).

Belongs to the eukaryotic ribosomal protein eL30 family. As to quaternary structure, part of the 50S ribosomal subunit.

The protein is Large ribosomal subunit protein eL30 of Pyrococcus furiosus (strain ATCC 43587 / DSM 3638 / JCM 8422 / Vc1).